A 644-amino-acid polypeptide reads, in one-letter code: Sodium/potassium/calcium exchanger 3 (644 aa).

Residues 1-44 (MRPSGDEDRARRRRRRRRRRDLLLSQLCFLASVALLLWSLSSLR) form the signal peptide. Topologically, residues 45–107 (EQKELDLMDL…DIFTNEDRRQ (63 aa)) are extracellular. Residues Asn-71 and Asn-86 are each glycosylated (N-linked (GlcNAc...) asparagine). A helical membrane pass occupies residues 108–128 (GAVVLHVLCAIYMFYALAIVC). Residues 129-153 (DDFFVPSLEKICERLHLSEDVAGAT) lie on the Cytoplasmic side of the membrane. The stretch at 149 to 189 (VAGATFMAAGSSAPELFTSVIGVFITKGDVGVGTIVGSAVF) is one Alpha-1 repeat. The helical transmembrane segment at 154–174 (FMAAGSSAPELFTSVIGVFIT) threads the bilayer. Residues 175-182 (KGDVGVGT) lie on the Extracellular side of the membrane. Residues 183–203 (IVGSAVFNILCIIGVCGLFAG) form a helical membrane-spanning segment. The Cytoplasmic segment spans residues 204–210 (QVVALSS). The helical transmembrane segment at 211–231 (WCLLRDSIYYTLSVIALIVFI) threads the bilayer. The Extracellular portion of the chain corresponds to 232-234 (YDE). Residues 235 to 255 (KVSWWESLVLVLMYLIYIVIM) traverse the membrane as a helical segment. Topologically, residues 256-484 (KYNACIHQCF…WFMVTFASST (229 aa)) are cytoplasmic. Ser-308 is modified (phosphoserine). Residues 405-442 (AEAGNETENENEDNENDEEEEEDEDDDEGPYTPFDTPS) form a disordered region. The segment covering 409-433 (NETENENEDNENDEEEEEDEDDDEG) has biased composition (acidic residues). Residues 485–505 (LWIAAFSYMMVWMVTIIGYTL) form a helical membrane-spanning segment. Topologically, residues 506–510 (GIPDV) are extracellular. A helical transmembrane segment spans residues 511-531 (IMGITFLAAGTSVPDCMASLI). The stretch at 518–549 (AAGTSVPDCMASLIVARQGMGDMAVSNSIGSN) is one Alpha-2 repeat. The Cytoplasmic segment spans residues 532–549 (VARQGMGDMAVSNSIGSN). The helical transmembrane segment at 550–570 (VFDILIGLGLPWALQTLAVDY) threads the bilayer. At 571 to 580 (GSYIRLNSRG) the chain is on the extracellular side. Residues 581 to 601 (LIYSVGLLLASVFVTVFGVHL) traverse the membrane as a helical segment. Topologically, residues 602-615 (NKWQLDKKLGCGCL) are cytoplasmic. Residues 616–636 (LLYGVFLCFSIMTEFNVFTFV) form a helical membrane-spanning segment. Topologically, residues 637–644 (NLPMCGDH) are extracellular.

The protein belongs to the Ca(2+):cation antiporter (CaCA) (TC 2.A.19) family. SLC24A subfamily. In terms of tissue distribution, abundant in the brain. Expressed at low levels in the aorta, uterus and intestine.

It localises to the cell membrane. It carries out the reaction Ca(2+)(out) + K(+)(out) + 4 Na(+)(in) = Ca(2+)(in) + K(+)(in) + 4 Na(+)(out). Functionally, calcium, potassium:sodium antiporter that transports 1 Ca(2+) and 1 K(+) in exchange for 4 Na(+). The sequence is that of Sodium/potassium/calcium exchanger 3 (SLC24A3) from Homo sapiens (Human).